Reading from the N-terminus, the 764-residue chain is Aconitate hydratase (764 aa).

75–77 contributes to the substrate binding site; the sequence is DSH. [4Fe-4S] cluster is bound by residues cysteine 307, cysteine 372, and cysteine 375. Residues arginine 405, arginine 410, arginine 568, and 648-649 each bind substrate; that span reads SR.

This sequence belongs to the aconitase/IPM isomerase family. It depends on [4Fe-4S] cluster as a cofactor.

It localises to the cytoplasm. The enzyme catalyses citrate = D-threo-isocitrate. It participates in carbohydrate metabolism; glyoxylate and dicarboxylate metabolism. Functionally, catalyzes the isomerization of citrate to isocitrate via cis-aconitate. The sequence is that of Aconitate hydratase (ACO) from Cucumis melo var. conomon (Oriental pickling melon).